Here is a 420-residue protein sequence, read N- to C-terminus: S-adenosylmethionine synthase (420 aa).

His16 is an ATP binding site. Residue Asp18 coordinates Mg(2+). Residue Glu44 participates in K(+) binding. Residues Glu57 and Gln100 each coordinate L-methionine. The interval Gln100–Thr110 is flexible loop. ATP-binding positions include Asp175–Lys177, Lys251–Phe252, Asp260, Arg266–Lys267, Ala283, and Lys287. Asp260 contributes to the L-methionine binding site. An L-methionine-binding site is contributed by Lys291.

Belongs to the AdoMet synthase family. As to quaternary structure, homotetramer; dimer of dimers. Mg(2+) serves as cofactor. It depends on K(+) as a cofactor.

Its subcellular location is the cytoplasm. The enzyme catalyses L-methionine + ATP + H2O = S-adenosyl-L-methionine + phosphate + diphosphate. It functions in the pathway amino-acid biosynthesis; S-adenosyl-L-methionine biosynthesis; S-adenosyl-L-methionine from L-methionine: step 1/1. In terms of biological role, catalyzes the formation of S-adenosylmethionine (AdoMet) from methionine and ATP. The overall synthetic reaction is composed of two sequential steps, AdoMet formation and the subsequent tripolyphosphate hydrolysis which occurs prior to release of AdoMet from the enzyme. This Trichormus variabilis (strain ATCC 29413 / PCC 7937) (Anabaena variabilis) protein is S-adenosylmethionine synthase.